We begin with the raw amino-acid sequence, 1654 residues long: Cortactin-binding protein 2 (1654 aa).

Positions 1–31 are disordered; it reads MATDGASCEPDFSRSPEDAAGATAEPAKKEF. The stretch at 119–276 forms a coiled coil; the sequence is RKMQERMSTQ…EQLKRGSDSK (158 aa). 3 disordered regions span residues 361 to 432, 455 to 480, and 495 to 596; these read SHGD…LHSP, GNAN…PTSR, and QALS…PQGN. The span at 368-379 shows a compositional bias: low complexity; sequence SSVPAAPTPSAS. Polar residues-rich tracts occupy residues 384–395 and 411–422; these read NGPSTGSAPDPT and QTPGTAAQSYSQ. An Asymmetric dimethylarginine modification is found at arginine 499. Polar residues predominate over residues 518 to 531; that stretch reads DVSSHTPVSRTSLK. ANK repeat units follow at residues 710-740, 744-773, 777-806, 810-839, 843-872, and 913-943; these read GRPT…DINY, DGHS…QVNA, NGFT…NINH, GGQT…DRSV, DGWT…PIPG, and EGWT…EPER. The tract at residues 1454-1478 is disordered; sequence GAWRKVSTSPRKKSGHFSSPVWNKP. At serine 1523 the chain carries Phosphoserine. The disordered stretch occupies residues 1556–1654; it reads RRLHSSGNNP…KEEIWNLRKK (99 aa). Residues 1581 to 1598 show a composition bias toward polar residues; that stretch reads KEVSPLSSHQTTECSNNK. The segment covering 1623 to 1637 has biased composition (low complexity); the sequence is SQNTKRSSSSSNTRQ. A compositionally biased stretch (basic and acidic residues) spans 1644 to 1654; that stretch reads SKEEIWNLRKK.

Interacts with CTTN/cortactin SH3 domain. Interacts with STRN, STRN4/zinedin and MOB4/phocein; this interactions mediate the association with the STRIPAK core complex and may regulate dendritic spine distribution of the STRIPAK complex in hippocampal neurons. Activation of glutamate receptors weakens the interaction with STRN and STRN4.

It is found in the cytoplasm. It localises to the cell cortex. The protein resides in the cell projection. The protein localises to the dendritic spine. Its function is as follows. Regulates the dendritic spine distribution of CTTN/cortactin in hippocampal neurons, and thus controls dendritic spinogenesis and dendritic spine maintenance. Associates with the striatin-interacting phosphatase and kinase (STRIPAK) core complex to regulate dendritic spine distribution of the STRIPAK complex in hippocampal neurons. The polypeptide is Cortactin-binding protein 2 (CTTNBP2) (Atelerix albiventris (Middle-African hedgehog)).